The following is a 280-amino-acid chain: Cell division control protein 2 homolog B (280 aa).

ATP contacts are provided by residues 1 to 5 (AYGVV) and Lys-20. In terms of domain architecture, Protein kinase spans 1–274 (AYGVVYKARD…AKKALEHEYF (274 aa)). Tyr-2 is subject to Phosphotyrosine. The active-site Proton acceptor is Asp-114. Thr-148 carries the phosphothreonine; by CAK modification.

Belongs to the protein kinase superfamily. CMGC Ser/Thr protein kinase family. CDC2/CDKX subfamily.

It carries out the reaction L-seryl-[protein] + ATP = O-phospho-L-seryl-[protein] + ADP + H(+). The enzyme catalyses L-threonyl-[protein] + ATP = O-phospho-L-threonyl-[protein] + ADP + H(+). It catalyses the reaction [DNA-directed RNA polymerase] + ATP = phospho-[DNA-directed RNA polymerase] + ADP + H(+). With respect to regulation, phosphorylation at Tyr-2 inactivates the enzyme, while phosphorylation at Thr-148 activates it. Plays a key role in the control of the eukaryotic cell cycle. This is Cell division control protein 2 homolog B (CDC2B) from Antirrhinum majus (Garden snapdragon).